The chain runs to 651 residues: Acetyl-coenzyme A synthetase 1 (651 aa).

Residues 191–194 (RGGK), T311, and N335 each bind CoA. ATP-binding positions include 387–389 (GEP), 411–416 (DTWWQT), D500, and R515. Position 523 (S523) interacts with CoA. R526 provides a ligand contact to ATP. Mg(2+) is bound by residues V537, H539, and V542. R584 is a CoA binding site. An N6-acetyllysine modification is found at K609.

This sequence belongs to the ATP-dependent AMP-binding enzyme family. Mg(2+) is required as a cofactor. In terms of processing, acetylated. Deacetylation by the SIR2-homolog deacetylase activates the enzyme.

It catalyses the reaction acetate + ATP + CoA = acetyl-CoA + AMP + diphosphate. Its function is as follows. Catalyzes the conversion of acetate into acetyl-CoA (AcCoA), an essential intermediate at the junction of anabolic and catabolic pathways. AcsA undergoes a two-step reaction. In the first half reaction, AcsA combines acetate with ATP to form acetyl-adenylate (AcAMP) intermediate. In the second half reaction, it can then transfer the acetyl group from AcAMP to the sulfhydryl group of CoA, forming the product AcCoA. The sequence is that of Acetyl-coenzyme A synthetase 1 from Pseudomonas aeruginosa (strain ATCC 15692 / DSM 22644 / CIP 104116 / JCM 14847 / LMG 12228 / 1C / PRS 101 / PAO1).